A 311-amino-acid chain; its full sequence is Pyrimidine-specific ribonucleoside hydrolase RihA (311 aa).

The active site involves His-240.

This sequence belongs to the IUNH family. RihA subfamily.

Its function is as follows. Hydrolyzes with equal efficiency cytidine or uridine to ribose and cytosine or uracil, respectively. This chain is Pyrimidine-specific ribonucleoside hydrolase RihA, found in Escherichia coli O7:K1 (strain IAI39 / ExPEC).